The following is a 235-amino-acid chain: Small ribosomal subunit protein uS3 (235 aa).

One can recognise a KH type-2 domain in the interval 39-107; the sequence is VRQFLNKELA…PAQINIAEVK (69 aa). Residues 216–235 are disordered; that stretch reads QPEQQPTDKPKKVPRGKGRK.

The protein belongs to the universal ribosomal protein uS3 family. As to quaternary structure, part of the 30S ribosomal subunit. Forms a tight complex with proteins S10 and S14.

In terms of biological role, binds the lower part of the 30S subunit head. Binds mRNA in the 70S ribosome, positioning it for translation. The polypeptide is Small ribosomal subunit protein uS3 (Aggregatibacter actinomycetemcomitans (Actinobacillus actinomycetemcomitans)).